We begin with the raw amino-acid sequence, 236 residues long: CBS domain-containing protein CBSX1, chloroplastic (236 aa).

A chloroplast-targeting transit peptide spans 1-53 (MDAVLYSVPLSFTPLRASSSPSSPYLLLPRFLSVQPCHKFTFSRSFPSKSRIP). Residues 47 to 66 (PSKSRIPSASSAAGSTLMTN) are disordered. Residue S54 is modified to N-acetylserine. 2 CBS domains span residues 81-142 (MTKK…GRTE) and 175-231 (MTPA…IKRS).

It localises to the plastid. It is found in the chloroplast. The sequence is that of CBS domain-containing protein CBSX1, chloroplastic (CBSX1) from Arabidopsis thaliana (Mouse-ear cress).